The chain runs to 204 residues: Rho GDP-dissociation inhibitor 1 (204 aa).

Residues 1 to 36 (MAEQEPTAEQLAQIAAENEEDEHSVNYKPPAQKSIQ) are disordered. Residue Ala-2 is modified to N-acetylalanine. A Phosphoserine modification is found at Ser-34. Lys-43 carries the post-translational modification N6-acetyllysine. Ser-47 carries the post-translational modification Phosphoserine. N6-acetyllysine occurs at positions 105 and 127. Residues Lys-138 and Lys-141 each participate in a glycyl lysine isopeptide (Lys-Gly) (interchain with G-Cter in SUMO1); alternate cross-link. Residues Lys-138 and Lys-141 each participate in a glycyl lysine isopeptide (Lys-Gly) (interchain with G-Cter in SUMO2); alternate cross-link. Lys-141 is modified (N6-acetyllysine; alternate). Lys-141 is modified (N6-succinyllysine; alternate). Lys-178 bears the N6-acetyllysine mark.

Belongs to the Rho GDI family. Monomer. Interacts with FER. Interacts with PLXNB3. Forms a heterodimer with RAC1. Interacts with RHOA, the affinity is increased by three orders of magnitude when RHOA is prenylated. Interacts with PSMD10; the interaction increases ARHGDIA association with RHOA, leading to ARHGDIA-mediated inactivation of RHOA and ROCK and prolonged AKT activation. Interacts with KANK2; the interaction is direct and may regulate the interaction of ARHGDIA with RHOA, RAC1 and CDC42. Interacts with RHOC. Interacts with CDC42. Interacts with NGFR (via death domain); NGFR binding decreases the affinity for RHOA. In kidney glomerulus, expressed in podocytes and mesangial cells.

It is found in the cytoplasm. In terms of biological role, controls Rho proteins homeostasis. Regulates the GDP/GTP exchange reaction of the Rho proteins by inhibiting the dissociation of GDP from them, and the subsequent binding of GTP to them. Retains Rho proteins such as CDC42, RAC1 and RHOA in an inactive cytosolic pool, regulating their stability and protecting them from degradation. Actively involved in the recycling and distribution of activated Rho GTPases in the cell, mediates extraction from membranes of both inactive and activated molecules due its exceptionally high affinity for prenylated forms. Through the modulation of Rho proteins, may play a role in cell motility regulation. In glioma cells, inhibits cell migration and invasion by mediating the signals of SEMA5A and PLXNB3 that lead to inactivation of RAC1. The protein is Rho GDP-dissociation inhibitor 1 (Arhgdia) of Mus musculus (Mouse).